The sequence spans 157 residues: MFDILMYLFENYVHSEVELLVDQDELTKELTRAGFHQSEIIKALSWLERLADIQEAGTPYLCNHDQQSFRIYTKAEMEKIDVESRGFLLFLEQIKVLSVETREMVIDRVMEIDEPTLNLDDLKWVILMVLFNAPGHESAYEQMEDLIFEQPDGRLHS.

Belongs to the Smg family.

In Shewanella halifaxensis (strain HAW-EB4), this protein is Protein Smg homolog.